The following is a 1383-amino-acid chain: MDEGVNLVFPKKVIDGTAIKRLISRLIDHFGMAHTSHILDQVKTLGFQQATATSISLGIDDLLTIPSKGWLVQDAEQQSLSLEKHHHYGNVHAVEKLRQSIEVWYATSEYLRQEMNPNFRMTDPFNPVHIMSFSGARGNASQVHQLVGMRGLMSDPQGQMIDLPIQSNLREGLSLTEYIISCYGARKGVVDTAVRTSDAGYLTRRLVEVVQHIVVRRTDCGTLRGISVSPRRMPERIFIQTLIGRVLADDIYIGSRCIAIRNQDIGIGLVNRFITFRIQPISIRTPFTCRSTSWICRLCYGRSPTHGDLVELGEAVGIIAGQSIGEPGTQLTLRTFHTGGVFTGGTAEHVRAPSNGKIKFNFNEALVHPARTRHGHPALLCSMDLDVTIESEDILHNLTIPPKSFLLVQNNQYVESEQVIAEICAGTSTFHFKERVRKHIYSDSEGEMHWSTDVYHAPEFTYSNVHLLPKTSHLWILSGGSCRSRGAPFSLHKDQDQMNPRSTERERRYLSSLSANNDQIRYKFFSSSFSGKKKDDRSPGYSEMNRIICTLPCNLIYPSILRENSDLLAKRRRNRLVIPVQSSQEREKELIPHSGISIELPINGIFRKKSILAFFDDPRYRTKSSGITQYETMGMHSIVKKEGLVDYRGINEFKPKYQMTIDRFFFIPEEVHILPESSSIMVRNNSLIGVDTRIALNTRSRAGGLVRVERKKRGIALQIFSGTIHFPGETDKISWDSGILIPPGTGKRNSKESKKWKNGIYVQRITPTKKKHFVLFRPVVTYEIADGLNLARLFPPDLCQEKDNMQLQIVNYIVYGNGKPIREISDTSIQLVRTWFILNWDQGKKSASAEAAHASFVEVRAKGLIRDFLRIDLVKSPILDPRKRNDPSGSGLISDNVSDHTNINPFYSKPKMKQSPRQNHGTIRTLLNQNKECPSLMILSASNCFRMGPFNDVKSQNVIKESIKKDAIIQIRNSIGPLGTALQVVNFDSFYYFITHNQVLLTKYLQVENLKQTFQVLQYYLMDESGRIYNPDPRSNIVLNSFNLSWYFLPHNNYENSCEEISTIVSLGQFICENGCIAKNGPYLRSGQVLIVRLDSVVIRSAKPYLATPGATVHGHYGEILYDGDTVVTFLYEKSRSGDITQGLPKVEQVLEVRSVDSISVNLEKRVENWNEHITRILGFPWGFLIGAELTIVQSRISLVNKIQKVYRSQGVQIHNRHIEIIVRQITSKVLVSEDGMSNVFLPRELIGLLRAERTGRALEESICYKAFLLGITRTSLNTQSFISEASFQETARVLAKAALRGRIDWLKGLKENVVIGGMIPVGTGFKGLVHCSKQHKSIPKNKHFFEGEIRDILFHHRELFDSCISKNFHDTPEQSFRVFNDS.

Residues Cys220, Cys289, Cys296, and Cys299 each contribute to the Zn(2+) site.

It belongs to the RNA polymerase beta' chain family. RpoC2 subfamily. As to quaternary structure, in plastids the minimal PEP RNA polymerase catalytic core is composed of four subunits: alpha, beta, beta', and beta''. When a (nuclear-encoded) sigma factor is associated with the core the holoenzyme is formed, which can initiate transcription. Zn(2+) is required as a cofactor.

The protein resides in the plastid. Its subcellular location is the chloroplast. The catalysed reaction is RNA(n) + a ribonucleoside 5'-triphosphate = RNA(n+1) + diphosphate. DNA-dependent RNA polymerase catalyzes the transcription of DNA into RNA using the four ribonucleoside triphosphates as substrates. The protein is DNA-directed RNA polymerase subunit beta'' of Oenothera argillicola (Appalachian evening primrose).